Here is a 362-residue protein sequence, read N- to C-terminus: Trans-enoyl reductase phm4 (362 aa).

An NADP(+)-binding site is contributed by 50-53; that stretch reads VDAK. 136–143 is a binding site for substrate; the sequence is TCFMTCGL. NADP(+) is bound by residues 171-174, 194-197, Tyr-212, and 259-260; these read ATAT, SPHS, and LD. 280–284 contacts substrate; it reads GPIML. NADP(+) is bound at residue 349–350; sequence VN.

This sequence belongs to the zinc-containing alcohol dehydrogenase family. In terms of assembly, monomer.

The protein operates within secondary metabolite biosynthesis. Its function is as follows. Trans-enoyl reductase; part of the gene cluster that mediates the biosynthesis of the trans-fused decalin-containing tetramic acid phomasetin, the stereochemical opposite of the HIV-1 integrase inhibitor equisetin. The PKS module of phm1 together with the enoylreductase phm4 catalyze the formation of the polyketide unit which is then conjugated to L-serine by the condensation domain of the phm1 NRPS module. Activity of the Dieckmann cyclase domain (RED) of phm1 results in release of the Dieckmann product intermediate. The Diels-Alderase phm7 then uses the Dieckmann product of phm1 as substrate and catalyzes the Diels-Alder cycloaddition to form the decalin ring of N-desmethylphomasetin. N-desmethylphomasetin is further methylated to phomasetin by the methyltransferase phm5. The polypeptide is Trans-enoyl reductase phm4 (Pyrenochaetopsis sp).